The primary structure comprises 269 residues: Cytochrome c oxidase subunit 3 (269 aa).

A run of 7 helical transmembrane segments spans residues 21–41 (PWPI…ALAM), 45–65 (IGNM…ATLW), 90–110 (GFLL…WAYF), 138–160 (PLLN…HALI), 167–187 (ALSG…CQYI), 205–225 (FYAG…MLAI), and 247–267 (VIYL…FYWW).

This sequence belongs to the cytochrome c oxidase subunit 3 family. In terms of assembly, component of the cytochrome c oxidase (complex IV, CIV), a multisubunit enzyme composed of a catalytic core of 3 subunits and several supernumerary subunits. The complex exists as a monomer or a dimer and forms supercomplexes (SCs) in the inner mitochondrial membrane with ubiquinol-cytochrome c oxidoreductase (cytochrome b-c1 complex, complex III, CIII).

It localises to the mitochondrion inner membrane. The catalysed reaction is 4 Fe(II)-[cytochrome c] + O2 + 8 H(+)(in) = 4 Fe(III)-[cytochrome c] + 2 H2O + 4 H(+)(out). Its function is as follows. Component of the cytochrome c oxidase, the last enzyme in the mitochondrial electron transport chain which drives oxidative phosphorylation. The respiratory chain contains 3 multisubunit complexes succinate dehydrogenase (complex II, CII), ubiquinol-cytochrome c oxidoreductase (cytochrome b-c1 complex, complex III, CIII) and cytochrome c oxidase (complex IV, CIV), that cooperate to transfer electrons derived from NADH and succinate to molecular oxygen, creating an electrochemical gradient over the inner membrane that drives transmembrane transport and the ATP synthase. Cytochrome c oxidase is the component of the respiratory chain that catalyzes the reduction of oxygen to water. Electrons originating from reduced cytochrome c in the intermembrane space (IMS) are transferred via the dinuclear copper A center (CU(A)) of subunit 2 and heme A of subunit 1 to the active site in subunit 1, a binuclear center (BNC) formed by heme A3 and copper B (CU(B)). The BNC reduces molecular oxygen to 2 water molecules using 4 electrons from cytochrome c in the IMS and 4 protons from the mitochondrial matrix. The sequence is that of Cytochrome c oxidase subunit 3 (COX3) from Lachancea kluyveri (strain ATCC 58438 / CBS 3082 / BCRC 21498 / NBRC 1685 / JCM 7257 / NCYC 543 / NRRL Y-12651) (Yeast).